A 107-amino-acid polypeptide reads, in one-letter code: Late embryogenesis abundant protein M10 (107 aa).

Positions 1 to 19 (MGNLMSLVLVALLFSLSLA) are cleaved as a signal peptide.

May be involved in the acquisition of desiccation tolerance during late phase of embryogenesis. The chain is Late embryogenesis abundant protein M10 from Arabidopsis thaliana (Mouse-ear cress).